The primary structure comprises 157 residues: Small ribosomal subunit protein uS7 (157 aa).

The protein belongs to the universal ribosomal protein uS7 family. As to quaternary structure, part of the 30S ribosomal subunit. Contacts proteins S9 and S11.

Functionally, one of the primary rRNA binding proteins, it binds directly to 16S rRNA where it nucleates assembly of the head domain of the 30S subunit. Is located at the subunit interface close to the decoding center, probably blocks exit of the E-site tRNA. In Borreliella burgdorferi (strain ATCC 35210 / DSM 4680 / CIP 102532 / B31) (Borrelia burgdorferi), this protein is Small ribosomal subunit protein uS7.